An 811-amino-acid chain; its full sequence is Protein MEI2-like 5 (811 aa).

2 consecutive RRM domains span residues 193–266 (RTLF…YSIP) and 278–351 (GTLV…PSRP). The tract at residues 371 to 397 (TKHNSFQIGSPSANSPPSLWSQLGSPT) is disordered. Residues 374–397 (NSFQIGSPSANSPPSLWSQLGSPT) show a composition bias toward polar residues.

Functionally, probable RNA-binding protein that may play a role in growth regulation. This Oryza sativa subsp. japonica (Rice) protein is Protein MEI2-like 5 (ML5).